We begin with the raw amino-acid sequence, 961 residues long: MAEGRGTHERPDVETQKTELGALMGTTLQRGAQWYLIDSRWFKQWKKYVGFDSWDMYNVGEHNLFPGPIDNSGLFSDPESQTLKEHLIDELDYVLVPTEAWNKLLNWYGCVEGQQPIVRKVVEHGLFVKHCKVEVYLLELKLCENSDPTNVLSCHFSKADTIATIEKEMRKLFNIPAERETRLWNKYMSNTYEQLSKLDNTIQDAGLYQGQVLVIEPQNEDGTWPRQTLQSKSSTAPSRNFTTSSKPSASPYSSMSASLIANGDSTNSSGMHNSGVSRGGAGFSASYNCQEPPSPHIQPGLCGLGNLGNTCFMNSALQCLSNTGPLTEYFLKDEYEAEINRDNPLGMKGEIAEAYAELIKQMWSGRDTHVAPRMFKTQVGRFAPQFSGYQQQDSQELLAFILDGLHEDLNRVKKKPYLEPKDANGRPDAVVAKEAWENHRLRNDSVIVDTFHGLFKSTLVCPECAKVSVTFDPFCYLTLPLPLKKDRIMEVFLVPADPHCRPIQYRVTVPLMGAISDLCEALSKLSGIAAENMVVTDVYNHRFHKIFQMDEGLSHITPRDDIFVYEICTTPMDGSEYITLPVYFREKKSRPSSTSSGAVLYGQPLLVSVPKHRLTLESLYQAVCERISRYIKQPLPEEFLSSPLEPGACNGSRGSYEGDEEEMDHQEEGKEQLSEVEESGEDSQGGDPTETTQKAKGPPRHKRLFTFSLVNSCGTADINSLATDGKLLKLNSRSTLAIDWDSETRSLYFDEQESEACEKHTSMSQPQKKKKAAIALRECIELFTTMETLGEHDPWYCPTCKKHQQATKKFDLWSLPKILVVHLKRFSYNRYWRDKLDTVVEFPVRALNMSEFVCDRAARPYVYDLIAVSNHYGAMGVGHYTAYAKNRLNGKWYYFDDSSVSLASEDQIVTKAAYVLFYQRRDDECPSTSSPVSFPGSDGGAKLSSSQQDLGEEEAYTMDTN.

Positions 11–122 (PDVETQKTEL…GQQPIVRKVV (112 aa)) constitute a DUSP domain. The necessary for interaction with SART3 stretch occupies residues 27–216 (TLQRGAQWYL…LYQGQVLVIE (190 aa)). The short motif at 133-141 (VEVYLLELK) is the Nuclear export signal element. Residues 142–226 (LCENSDPTNV…PQNEDGTWPR (85 aa)) form the Ubiquitin-like 1 domain. The segment at 219 to 257 (NEDGTWPRQTLQSKSSTAPSRNFTTSSKPSASPYSSMSA) is disordered. Polar residues predominate over residues 225 to 243 (PRQTLQSKSSTAPSRNFTT). The tract at residues 229–295 (LQSKSSTAPS…SYNCQEPPSP (67 aa)) is required for USP4 activation by providing conformational flexibility between the DUSP and catalytic domains. Over residues 244–257 (SSKPSASPYSSMSA) the composition is skewed to low complexity. In terms of domain architecture, USP spans 302-921 (CGLGNLGNTC…AAYVLFYQRR (620 aa)). The active site involves C311. Positions 384–386 (PQF) are regulates ubiquitin dissociation. Residues 405–407 (LHE) are necessary for interaction with RBL2. The residue at position 445 (S445) is a Phosphoserine. Residues 459 to 463 (LVCPE) form a necessary for interaction with RB1 and RBL2 region. Zn(2+) contacts are provided by C461 and C464. Residues 483–571 (LKKDRIMEVF…IFVYEICTTP (89 aa)) enclose the Ubiquitin-like 2 domain. An interacts with DUSP and ubiquitin-like 1 domains and is required for USP4 activation region spans residues 485 to 773 (KDRIMEVFLV…SQPQKKKKAA (289 aa)). The tract at residues 641–700 (SSPLEPGACNGSRGSYEGDEEEMDHQEEGKEQLSEVEESGEDSQGGDPTETTQKAKGPPR) is disordered. S655, S674, and S679 each carry phosphoserine. The Nuclear localization signal signature appears at 765–770 (QPQKKK). Zn(2+)-binding residues include C797 and C800. H879 is an active-site residue. A disordered region spans residues 924-961 (ECPSTSSPVSFPGSDGGAKLSSSQQDLGEEEAYTMDTN). Positions 950–961 (LGEEEAYTMDTN) are enriched in acidic residues.

Belongs to the peptidase C19 family. USP4 subfamily. Interacts with RB1 (both dephosphorylated and hypophosphorylated forms). Interacts with RBL1 and RBL2. Interacts with ADORA2A (via cytoplasmic C-terminus); the interaction is direct. Interacts with SART3; recruits USP4 to its substrate PRPF3. Phosphorylated at Ser-445 by PKB/AKT1 in response to EGF stimulus, promoting its ability deubiquitinate RHEB. Post-translationally, monoubiquitinated by TRIM21. Ubiquitination does not lead to its proteasomal degradation. Autodeubiquitinated. In terms of tissue distribution, expressed in hippocampus and striatum (at protein level).

The protein localises to the cytoplasm. It is found in the nucleus. The catalysed reaction is Thiol-dependent hydrolysis of ester, thioester, amide, peptide and isopeptide bonds formed by the C-terminal Gly of ubiquitin (a 76-residue protein attached to proteins as an intracellular targeting signal).. Its activity is regulated as follows. The completion of the deubiquitinase reaction is mediated by the DUSP and ubiquitin-like 1 domains which promotes the release of ubiquitin from the catalytic site enabling subsequent reactions to occur. Its function is as follows. Deubiquitinating enzyme that removes conjugated ubiquitin from target proteins. Deubiquitinates PDPK1. Deubiquitinates TRIM21. Deubiquitinates receptor ADORA2A which increases the amount of functional receptor at the cell surface. Deubiquitinates HAS2. Deubiquitinates RHEB in response to EGF signaling, promoting mTORC1 signaling. May regulate mRNA splicing through deubiquitination of the U4 spliceosomal protein PRPF3. This may prevent its recognition by the U5 component PRPF8 thereby destabilizing interactions within the U4/U6.U5 snRNP. May also play a role in the regulation of quality control in the ER. The sequence is that of Ubiquitin carboxyl-terminal hydrolase 4 (Usp4) from Rattus norvegicus (Rat).